Consider the following 120-residue polypeptide: Accessory gland protein Acp53Ea (120 aa).

A signal peptide spans 1 to 23; it reads MKLIKVTLVFSLLALVFVAQTEA.

Main cells of accessory gland and seminal fluid.

It localises to the secreted. In terms of biological role, responsible for physiological and behavioral changes in mated female flies. This is Accessory gland protein Acp53Ea (Acp53Ea) from Drosophila melanogaster (Fruit fly).